Here is a 746-residue protein sequence, read N- to C-terminus: Proline--tRNA ligase (746 aa).

Positions 1–223 are required for editing of incorrectly charged tRNA; that stretch reads MNNNTNGEII…NSNNNNNNNN (223 aa). A compositionally biased stretch (basic and acidic residues) spans 181-201; sequence TSKARVDKKEDVQEEMAKNEE. The interval 181–226 is disordered; the sequence is TSKARVDKKEDVQEEMAKNEELQNNNNNNKNNSNSNNNNNNNNNHI. A compositionally biased stretch (low complexity) spans 204 to 224; sequence NNNNNNKNNSNSNNNNNNNNN. Arg-390 lines the L-proline pocket. ATP contacts are provided by residues 390–394, 401–405, and 475–477; these read RWEFK, RTREF, and QAA. An L-proline-binding site is contributed by His-480. Position 512 to 514 (512 to 514) interacts with ATP; it reads TTR.

It belongs to the class-II aminoacyl-tRNA synthetase family. ProS type 3 subfamily. In terms of assembly, homodimer.

It localises to the cytoplasm. It carries out the reaction tRNA(Pro) + L-proline + ATP = L-prolyl-tRNA(Pro) + AMP + diphosphate. Its activity is regulated as follows. Inhibited by the quinazolinone-based compound febrifugine from the Chinese plant Dichroa febrifuga which is used to treat malaria-associated fever. Also inhibited by febrifugine derivatives such as halofuginone. Catalyzes the attachment of proline to tRNA(Pro) in a two-step reaction: proline is first activated by ATP to form Pro-AMP and then transferred to the acceptor end of tRNA(Pro). Functions in trans to edit the amino acid moiety from incorrectly charged Ala-tRNA(Pro). Has no activity on correctly charged Pro-tRNA(Pro) or Ala-tRNA(Ala). The protein is Proline--tRNA ligase of Plasmodium falciparum (isolate 3D7).